The chain runs to 712 residues: Polyribonucleotide nucleotidyltransferase (712 aa).

2 residues coordinate Mg(2+): D487 and D493. Positions 554-613 constitute a KH domain; the sequence is PKIITMTINPDKIRDVIGPSGKQINKIIEETGVKIDIEQDGTVFISSINQEMNDKAKKII. Positions 623–691 constitute an S1 motif domain; sequence GEIYEGKVKR…KQGRVNLSRK (69 aa).

It belongs to the polyribonucleotide nucleotidyltransferase family. Mg(2+) is required as a cofactor.

The protein resides in the cytoplasm. The enzyme catalyses RNA(n+1) + phosphate = RNA(n) + a ribonucleoside 5'-diphosphate. In terms of biological role, involved in mRNA degradation. Catalyzes the phosphorolysis of single-stranded polyribonucleotides processively in the 3'- to 5'-direction. The chain is Polyribonucleotide nucleotidyltransferase from Bacillus cereus (strain ATCC 10987 / NRS 248).